Reading from the N-terminus, the 410-residue chain is Maintenance of mitochondrial morphology protein 1 (410 aa).

At 1-19 (MTPDSCPVRPEPTLSFTQG) the chain is on the lumenal side. The helical transmembrane segment at 20 to 40 (LIVGQISVVFLIAAFIKFFIF) threads the bilayer. The Cytoplasmic portion of the chain corresponds to 41–410 (GDPPSAEETA…PMPGSLAVDD (370 aa)). Residues 71–87 (LRTSNQRPGSQQQQSVL) are compositionally biased toward polar residues. Positions 71-98 (LRTSNQRPGSQQQQSVLNRKKSSILRSG) are disordered. The SMP-LTD domain maps to 119 to 335 (QPESLDWFNV…EPRFQEIPLP (217 aa)). A disordered region spans residues 380–410 (ARQAAQRDSLRYRRPRADDAFPMPGSLAVDD). The segment covering 387-398 (DSLRYRRPRADD) has biased composition (basic and acidic residues).

The protein belongs to the MMM1 family. Homodimer. Component of the ER-mitochondria encounter structure (ERMES) or MDM complex, composed of MMM1, MDM10, MDM12 and MDM34. An MMM1 homodimer associates with one molecule of MDM12 on each side in a pairwise head-to-tail manner, and the SMP-LTD domains of MMM1 and MDM12 generate a continuous hydrophobic tunnel for phospholipid trafficking.

It localises to the endoplasmic reticulum membrane. Its function is as follows. Component of the ERMES/MDM complex, which serves as a molecular tether to connect the endoplasmic reticulum (ER) and mitochondria. Components of this complex are involved in the control of mitochondrial shape and protein biogenesis, and function in nonvesicular lipid trafficking between the ER and mitochondria. The MDM12-MMM1 subcomplex functions in the major beta-barrel assembly pathway that is responsible for biogenesis of all outer membrane beta-barrel proteins, and acts in a late step after the SAM complex. The MDM10-MDM12-MMM1 subcomplex further acts in the TOM40-specific pathway after the action of the MDM12-MMM1 complex. Essential for establishing and maintaining the structure of mitochondria and maintenance of mtDNA nucleoids. This is Maintenance of mitochondrial morphology protein 1 from Pyricularia oryzae (strain 70-15 / ATCC MYA-4617 / FGSC 8958) (Rice blast fungus).